A 111-amino-acid chain; its full sequence is Denmotoxin (111 aa).

The first 19 residues, 1-19 (MKTLLLAVAVVAFVCLGSA), serve as a signal peptide directing secretion. Positions 20–34 (DQLGLGRQQIDWGQG) are excised as a propeptide. Pyrrolidone carboxylic acid is present on Q35. 5 disulfide bridges follow: C44–C68, C47–C55, C61–C87, C91–C102, and C103–C108.

As to quaternary structure, monomer. Expressed by the venom gland.

It is found in the secreted. Its function is as follows. This bird-specific postsynaptic neurotoxin irreversibly binds and inhibits the chick muscle alpha-1-beta-1-gamma-delta (CHRNA1-CHRNB1-CHRNG-CHNRD) nicotinic acetylcholine receptor (nAChR) 100-fold more compared with the mouse receptor. The weak binding to mouse receptor is reversible. This chain is Denmotoxin, found in Boiga dendrophila (Mangrove snake).